The sequence spans 418 residues: Beta-arrestin-1 (418 aa).

Residues 1 to 163 (MGDKGTRVFK…LEEKIHKRNS (163 aa)) form an interaction with SRC region. An interaction with CHRM2 region spans residues 45–86 (PEYLKERRVYVTLTCAFRYGREDLDVLGLTFRKDLFVANVQS). A Phosphotyrosine modification is found at Tyr47. Residues Lys250, Met255, Lys324, and Lys326 each coordinate 1D-myo-inositol hexakisphosphate. Residues 318-418 (IVSYKVKVKL…GTGSPHLNNR (101 aa)) are interaction with TRAF6. Disordered stretches follow at residues 353-375 (HPKP…VDTN) and 397-418 (KGMK…LNNR). Positions 355 to 366 (KPKEEPPHREVP) are enriched in basic and acidic residues. At Ser412 the chain carries Phosphoserine.

This sequence belongs to the arrestin family. In terms of assembly, monomer. Homodimer. Homooligomer; the self-association is mediated by InsP6-binding. Heterooligomer with ARRB2; the association is mediated by InsP6-binding. Interacts with ADRB2 (phosphorylated). Interacts with CHRM2 (phosphorylated). Interacts with LHCGR. Interacts with CYTH2 and CASR. Interacts with AP2B1 (dephosphorylated); phosphorylation of AP2B1 disrupts the interaction. Interacts (dephosphorylated at Ser-412) with CLTC. Interacts with CCR2 and GRK2. Interacts with CRR5. Interacts with PTAFR (phosphorylated on serine residues). Interacts with CLTC and MAP2K3. Interacts with CREB1. Interacts with TRAF6. Interacts with IGF1R and MDM2. Interacts with C5AR1. Interacts with PDE4D. Interacts with SRC (via the SH3 domain and the protein kinase domain); the interaction is independent of the phosphorylation state of SRC C-terminus. Interacts with TACR1. Interacts with RAF1. Interacts with DVL1; the interaction is enhanced by phosphorylation of DVL1. Interacts with DVL2; the interaction is enhanced by phosphorylation of DVL2. Interacts with IGF1R. Interacts with CHUK, IKBKB and MAP3K14. Associates with MAP kinase p38. Part of a MAPK signaling complex consisting of TACR1, ARRB1, SRC, MAPK1 (activated) and MAPK3 (activated). Part of a MAPK signaling complex consisting of F2RL1, ARRB1, RAF1, MAPK1 (activated) and MAPK3 (activated). Interacts with GPR143. Interacts with MAP2K4/MKK4. Interacts with HCK and CXCR1 (phosphorylated). Interacts with ACKR3 and ACKR4. Interacts with ARRDC1; the interaction is direct. Interacts with GPR61, GPR62 and GPR135. Post-translationally, constitutively phosphorylated at in the cytoplasm. At the plasma membrane, is rapidly dephosphorylated, a process that is required for clathrin binding and ADRB2 endocytosis but not for ADRB2 binding and desensitization. Once internalized, is rephosphorylated. The ubiquitination status appears to regulate the formation and trafficking of beta-arrestin-GPCR complexes and signaling. Ubiquitination appears to occur GPCR-specific. Ubiquitinated by MDM2; the ubiquitination is required for rapid internalization of ADRB2. Deubiquitinated by USP33; the deubiquitination leads to a dissociation of the beta-arrestin-GPCR complex. Stimulation of a class A GPCR, such as ADRB2, induces transient ubiquitination and subsequently promotes association with USP33.

It localises to the cytoplasm. Its subcellular location is the nucleus. The protein resides in the cell membrane. It is found in the membrane. The protein localises to the clathrin-coated pit. It localises to the cell projection. Its subcellular location is the pseudopodium. The protein resides in the cytoplasmic vesicle. Its function is as follows. Functions in regulating agonist-mediated G-protein coupled receptor (GPCR) signaling by mediating both receptor desensitization and resensitization processes. During homologous desensitization, beta-arrestins bind to the GPRK-phosphorylated receptor and sterically preclude its coupling to the cognate G-protein; the binding appears to require additional receptor determinants exposed only in the active receptor conformation. The beta-arrestins target many receptors for internalization by acting as endocytic adapters (CLASPs, clathrin-associated sorting proteins) and recruiting the GPRCs to the adapter protein 2 complex 2 (AP-2) in clathrin-coated pits (CCPs). However, the extent of beta-arrestin involvement appears to vary significantly depending on the receptor, agonist and cell type. Internalized arrestin-receptor complexes traffic to intracellular endosomes, where they remain uncoupled from G-proteins. Two different modes of arrestin-mediated internalization occur. Class A receptors, like ADRB2, OPRM1, ENDRA, D1AR and ADRA1B dissociate from beta-arrestin at or near the plasma membrane and undergo rapid recycling. Class B receptors, like AVPR2, AGTR1, NTSR1, TRHR and TACR1 internalize as a complex with arrestin and traffic with it to endosomal vesicles, presumably as desensitized receptors, for extended periods of time. Receptor resensitization then requires that receptor-bound arrestin is removed so that the receptor can be dephosphorylated and returned to the plasma membrane. Involved in internalization of P2RY4 and UTP-stimulated internalization of P2RY2. Involved in phosphorylation-dependent internalization of OPRD1 ands subsequent recycling. Involved in the degradation of cAMP by recruiting cAMP phosphodiesterases to ligand-activated receptors. Beta-arrestins function as multivalent adapter proteins that can switch the GPCR from a G-protein signaling mode that transmits short-lived signals from the plasma membrane via small molecule second messengers and ion channels to a beta-arrestin signaling mode that transmits a distinct set of signals that are initiated as the receptor internalizes and transits the intracellular compartment. Acts as a signaling scaffold for MAPK pathways such as MAPK1/3 (ERK1/2). ERK1/2 activated by the beta-arrestin scaffold is largely excluded from the nucleus and confined to cytoplasmic locations such as endocytic vesicles, also called beta-arrestin signalosomes. Recruits c-Src/SRC to ADRB2 resulting in ERK activation. GPCRs for which the beta-arrestin-mediated signaling relies on both ARRB1 and ARRB2 (codependent regulation) include ADRB2, F2RL1 and PTH1R. For some GPCRs the beta-arrestin-mediated signaling relies on either ARRB1 or ARRB2 and is inhibited by the other respective beta-arrestin form (reciprocal regulation). Inhibits ERK1/2 signaling in AGTR1- and AVPR2-mediated activation (reciprocal regulation). Is required for SP-stimulated endocytosis of NK1R and recruits c-Src/SRC to internalized NK1R resulting in ERK1/2 activation, which is required for the antiapoptotic effects of SP. Is involved in proteinase-activated F2RL1-mediated ERK activity. Acts as a signaling scaffold for the AKT1 pathway. Is involved in alpha-thrombin-stimulated AKT1 signaling. Is involved in IGF1-stimulated AKT1 signaling leading to increased protection from apoptosis. Involved in activation of the p38 MAPK signaling pathway and in actin bundle formation. Involved in F2RL1-mediated cytoskeletal rearrangement and chemotaxis. Involved in AGTR1-mediated stress fiber formation by acting together with GNAQ to activate RHOA. Appears to function as signaling scaffold involved in regulation of MIP-1-beta-stimulated CCR5-dependent chemotaxis. Involved in attenuation of NF-kappa-B-dependent transcription in response to GPCR or cytokine stimulation by interacting with and stabilizing CHUK. May serve as nuclear messenger for GPCRs. Involved in OPRD1-stimulated transcriptional regulation by translocating to CDKN1B and FOS promoter regions and recruiting EP300 resulting in acetylation of histone H4. Involved in regulation of LEF1 transcriptional activity via interaction with DVL1 and/or DVL2 Also involved in regulation of receptors other than GPCRs. Involved in Toll-like receptor and IL-1 receptor signaling through the interaction with TRAF6 which prevents TRAF6 autoubiquitination and oligomerization required for activation of NF-kappa-B and JUN. Involved in IL8-mediated granule release in neutrophils. Binds phosphoinositides. Binds inositolhexakisphosphate (InsP6). Required for atypical chemokine receptor ACKR2-induced RAC1-LIMK1-PAK1-dependent phosphorylation of cofilin (CFL1) and for the up-regulation of ACKR2 from endosomal compartment to cell membrane, increasing its efficiency in chemokine uptake and degradation. Involved in the internalization of the atypical chemokine receptor ACKR3. Negatively regulates the NOTCH signaling pathway by mediating the ubiquitination and degradation of NOTCH1 by ITCH. Participates in the recruitment of the ubiquitin-protein ligase to the receptor. The protein is Beta-arrestin-1 (Arrb1) of Mus musculus (Mouse).